The following is a 257-amino-acid chain: NAD kinase (257 aa).

Aspartate 46 acts as the Proton acceptor in catalysis. NAD(+) contacts are provided by residues aspartate 46–glycine 47, asparagine 116–glutamate 117, aspartate 146, alanine 154, and threonine 157–serine 162.

This sequence belongs to the NAD kinase family. A divalent metal cation serves as cofactor.

Its subcellular location is the cytoplasm. The enzyme catalyses NAD(+) + ATP = ADP + NADP(+) + H(+). Its function is as follows. Involved in the regulation of the intracellular balance of NAD and NADP, and is a key enzyme in the biosynthesis of NADP. Catalyzes specifically the phosphorylation on 2'-hydroxyl of the adenosine moiety of NAD to yield NADP. This chain is NAD kinase, found in Mesorhizobium japonicum (strain LMG 29417 / CECT 9101 / MAFF 303099) (Mesorhizobium loti (strain MAFF 303099)).